The following is a 223-amino-acid chain: Putative 3-methyladenine DNA glycosylase (223 aa).

The protein belongs to the DNA glycosylase MPG family.

This is Putative 3-methyladenine DNA glycosylase from Pseudomonas savastanoi pv. phaseolicola (strain 1448A / Race 6) (Pseudomonas syringae pv. phaseolicola (strain 1448A / Race 6)).